The sequence spans 70 residues: Putative peptide YY-3 (70 aa).

An N-terminal signal peptide occupies residues 1–23 (MVSVCRPWPAVAIALLALLVCLG).

It belongs to the NPY family.

It is found in the secreted. This Homo sapiens (Human) protein is Putative peptide YY-3 (PYY3).